We begin with the raw amino-acid sequence, 628 residues long: ATP-dependent RNA helicase mrh4, mitochondrial (628 aa).

The transit peptide at 1-40 directs the protein to the mitochondrion; sequence MSLAVRPPVCLLCRSGAPTLLPSSVSQVARSMATARLRRK. Residues 51-109 are disordered; sequence AKSSINQKRSGKAKFGPWSGMNQTEAHIRGEPRSRSQAALRRSGEKAADTPRKSDSPLY. Positions 92–105 are enriched in basic and acidic residues; sequence RSGEKAADTPRKSD. Positions 137-170 match the Q motif motif; that stretch reads TSFDHFPLLPVVRHSIFSQALPGLVDVTPTPIQR. Positions 190–402 constitute a Helicase ATP-binding domain; the sequence is EDGDPQYDQY…RKRYPDIKRL (213 aa). Position 203 to 210 (203 to 210) interacts with ATP; that stretch reads AETGSGKT. Basic and acidic residues predominate over residues 228 to 253; that stretch reads DKENERKEEERKAKEKEERLKNRAFD. Residues 228–260 form a disordered region; sequence DKENERKEEERKAKEKEERLKNRAFDLEPEEPP. A DEAD box motif is present at residues 349-352; the sequence is DEAD. Residues 456-628 enclose the Helicase C-terminal domain; it reads YVGPNIKKIL…EGMFRGQALI (173 aa).

The protein belongs to the DEAD box helicase family. MRH4 subfamily.

It localises to the mitochondrion. It catalyses the reaction ATP + H2O = ADP + phosphate + H(+). In terms of biological role, ATP-binding RNA helicase involved in mitochondrial RNA metabolism. Required for maintenance of mitochondrial DNA. This chain is ATP-dependent RNA helicase mrh4, mitochondrial (mrh4), found in Aspergillus oryzae (strain ATCC 42149 / RIB 40) (Yellow koji mold).